The chain runs to 352 residues: Divinyl chlorophyll a/b light-harvesting protein PcbA (352 aa).

Helical transmembrane passes span 27–47, 90–110, 142–162, 203–223, 243–263, and 306–326; these read FIAA…AFTL, VLAI…GGLL, FILG…VEWA, VMGG…WHIA, AVLS…AFWS, and LANV…WHAL.

This sequence belongs to the PsbB/PsbC family. IsiA/Pcb subfamily. In terms of assembly, the antenna complex consists of divinyl chlorophylls (a and b) and divinyl chlorophyll a/b binding proteins and binds less divinyl chlorophyll b than does low-light-adapted Prochlorococcus. Also forms complexes with PSII, consisting of a PSII dimer and 4 or 8 PcbA subunits. These complexes are also found under conditions of iron-starvation. Divinyl chlorophyll a serves as cofactor. Requires divinyl chlorophyll b as cofactor.

It localises to the cellular thylakoid membrane. Its function is as follows. The antenna complex functions as a light receptor, it captures and delivers excitation energy to photosystem II and possibly to photosystem I. The Prochlorales pcb genes are not related to higher plant LHCs. The polypeptide is Divinyl chlorophyll a/b light-harvesting protein PcbA (pcbA) (Prochlorococcus marinus subsp. pastoris (strain CCMP1986 / NIES-2087 / MED4)).